A 213-amino-acid polypeptide reads, in one-letter code: Orotate phosphoribosyltransferase (213 aa).

5-phospho-alpha-D-ribose 1-diphosphate is bound at residue lysine 26. Orotate is bound at residue 34 to 35 (FF). 5-phospho-alpha-D-ribose 1-diphosphate is bound by residues 72-73 (YK), arginine 99, lysine 100, lysine 103, histidine 105, and 124-132 (DDVITAGTA). The orotate site is built by threonine 128 and arginine 156.

The protein belongs to the purine/pyrimidine phosphoribosyltransferase family. PyrE subfamily. Homodimer. Mg(2+) is required as a cofactor.

It carries out the reaction orotidine 5'-phosphate + diphosphate = orotate + 5-phospho-alpha-D-ribose 1-diphosphate. The protein operates within pyrimidine metabolism; UMP biosynthesis via de novo pathway; UMP from orotate: step 1/2. In terms of biological role, catalyzes the transfer of a ribosyl phosphate group from 5-phosphoribose 1-diphosphate to orotate, leading to the formation of orotidine monophosphate (OMP). The chain is Orotate phosphoribosyltransferase from Pseudomonas paraeruginosa (strain DSM 24068 / PA7) (Pseudomonas aeruginosa (strain PA7)).